The primary structure comprises 89 residues: MLKFVVLIFVVIMASTFAEQCGDKVCGEGTCCSEFPVVHCRELGIVDDLCMSPGETTDSGRYLFFCPCETGLRCDKNDWTCKQDSSRSE.

The first 18 residues, 1 to 18 (MLKFVVLIFVVIMASTFA), serve as a signal peptide directing secretion. Cystine bridges form between Cys21–Cys32, Cys26–Cys40, Cys31–Cys66, Cys50–Cys74, and Cys68–Cys81. Residues 87 to 89 (RSE) constitute a propeptide that is removed on maturation.

This sequence belongs to the MIT-like AcTx family. As to expression, expressed by the venom gland.

The protein resides in the secreted. The polypeptide is U1-hexatoxin-Iw1e (Illawarra wisharti (Illawarra funnel-web spider)).